A 93-amino-acid chain; its full sequence is Small ribosomal subunit protein uS19 (93 aa).

Belongs to the universal ribosomal protein uS19 family.

Protein S19 forms a complex with S13 that binds strongly to the 16S ribosomal RNA. This chain is Small ribosomal subunit protein uS19, found in Mycolicibacterium paratuberculosis (strain ATCC BAA-968 / K-10) (Mycobacterium paratuberculosis).